The chain runs to 396 residues: NADH-quinone oxidoreductase subunit D (396 aa).

Belongs to the complex I 49 kDa subunit family. In terms of assembly, NDH-1 is composed of 14 different subunits. Subunits NuoB, C, D, E, F, and G constitute the peripheral sector of the complex.

The protein localises to the cell inner membrane. It catalyses the reaction a quinone + NADH + 5 H(+)(in) = a quinol + NAD(+) + 4 H(+)(out). Functionally, NDH-1 shuttles electrons from NADH, via FMN and iron-sulfur (Fe-S) centers, to quinones in the respiratory chain. The immediate electron acceptor for the enzyme in this species is believed to be ubiquinone. Couples the redox reaction to proton translocation (for every two electrons transferred, four hydrogen ions are translocated across the cytoplasmic membrane), and thus conserves the redox energy in a proton gradient. The protein is NADH-quinone oxidoreductase subunit D of Bartonella quintana (strain Toulouse) (Rochalimaea quintana).